The chain runs to 223 residues: Urease accessory protein UreF (223 aa).

Belongs to the UreF family. UreD, UreF and UreG form a complex that acts as a GTP-hydrolysis-dependent molecular chaperone, activating the urease apoprotein by helping to assemble the nickel containing metallocenter of UreC. The UreE protein probably delivers the nickel.

Its subcellular location is the cytoplasm. Its function is as follows. Required for maturation of urease via the functional incorporation of the urease nickel metallocenter. The polypeptide is Urease accessory protein UreF (Rhizobium leguminosarum bv. trifolii (strain WSM2304)).